The following is a 239-amino-acid chain: LexA repressor (239 aa).

The tract at residues 1-40 (MTEAATGPEGADPSRAARSLPGRPPGIRADSSGLTDRQRR) is disordered. Residues 58–78 (MREIGQAVGLSSTSSVAHQLM) constitute a DNA-binding region (H-T-H motif). The span at 89 to 100 (DPHRPRAYEVRG) shows a compositional bias: basic and acidic residues. Positions 89–116 (DPHRPRAYEVRGSDQPSAQPADTSGKPA) are disordered. Catalysis depends on for autocatalytic cleavage activity residues Ser-163 and Lys-200.

This sequence belongs to the peptidase S24 family. Homodimer.

The catalysed reaction is Hydrolysis of Ala-|-Gly bond in repressor LexA.. Represses a number of genes involved in the response to DNA damage (SOS response), including recA and lexA. In the presence of single-stranded DNA, RecA interacts with LexA causing an autocatalytic cleavage which disrupts the DNA-binding part of LexA, leading to derepression of the SOS regulon and eventually DNA repair. The protein is LexA repressor of Streptomyces clavuligerus.